Reading from the N-terminus, the 227-residue chain is UPF0173 metal-dependent hydrolase BCAH820_4729 (227 aa).

Belongs to the UPF0173 family.

This Bacillus cereus (strain AH820) protein is UPF0173 metal-dependent hydrolase BCAH820_4729.